The chain runs to 261 residues: Ribosomal RNA large subunit methyltransferase E (261 aa).

The S-adenosyl-L-methionine site is built by glycine 81, tryptophan 83, aspartate 104, aspartate 120, and aspartate 144. Lysine 184 serves as the catalytic Proton acceptor. The interval 233 to 261 (GNALGHEVEDDGPMPHDPREDATADEDQD) is disordered. A compositionally biased stretch (basic and acidic residues) spans 245-254 (PMPHDPREDA).

This sequence belongs to the class I-like SAM-binding methyltransferase superfamily. RNA methyltransferase RlmE family.

The protein localises to the cytoplasm. It carries out the reaction uridine(2552) in 23S rRNA + S-adenosyl-L-methionine = 2'-O-methyluridine(2552) in 23S rRNA + S-adenosyl-L-homocysteine + H(+). Specifically methylates the uridine in position 2552 of 23S rRNA at the 2'-O position of the ribose in the fully assembled 50S ribosomal subunit. The chain is Ribosomal RNA large subunit methyltransferase E from Allorhizobium ampelinum (strain ATCC BAA-846 / DSM 112012 / S4) (Agrobacterium vitis (strain S4)).